Consider the following 120-residue polypeptide: Ribonuclease P protein component 2 (120 aa).

It belongs to the eukaryotic/archaeal RNase P protein component 2 family. As to quaternary structure, consists of a catalytic RNA component and at least 4-5 protein subunits.

It localises to the cytoplasm. It catalyses the reaction Endonucleolytic cleavage of RNA, removing 5'-extranucleotides from tRNA precursor.. Functionally, part of ribonuclease P, a protein complex that generates mature tRNA molecules by cleaving their 5'-ends. This chain is Ribonuclease P protein component 2, found in Thermococcus kodakarensis (strain ATCC BAA-918 / JCM 12380 / KOD1) (Pyrococcus kodakaraensis (strain KOD1)).